Reading from the N-terminus, the 194-residue chain is Large ribosomal subunit protein bL25 (194 aa).

Belongs to the bacterial ribosomal protein bL25 family. CTC subfamily. In terms of assembly, part of the 50S ribosomal subunit; part of the 5S rRNA/L5/L18/L25 subcomplex. Contacts the 5S rRNA. Binds to the 5S rRNA independently of L5 and L18.

Functionally, this is one of the proteins that binds to the 5S RNA in the ribosome where it forms part of the central protuberance. In Geobacter sulfurreducens (strain ATCC 51573 / DSM 12127 / PCA), this protein is Large ribosomal subunit protein bL25.